Reading from the N-terminus, the 104-residue chain is ATP-dependent Clp protease adapter protein ClpS (104 aa).

A disordered region spans residues 1-20; the sequence is MAEETPTRSPGGAAVLDKAP.

This sequence belongs to the ClpS family. As to quaternary structure, binds to the N-terminal domain of the chaperone ClpA.

Involved in the modulation of the specificity of the ClpAP-mediated ATP-dependent protein degradation. This is ATP-dependent Clp protease adapter protein ClpS from Synechococcus sp. (strain CC9902).